The sequence spans 38 residues: Large ribosomal subunit protein bL36 (38 aa).

This sequence belongs to the bacterial ribosomal protein bL36 family.

In Synechococcus sp. (strain JA-2-3B'a(2-13)) (Cyanobacteria bacterium Yellowstone B-Prime), this protein is Large ribosomal subunit protein bL36.